The primary structure comprises 749 residues: Replication restart protein PriA (749 aa).

The Helicase ATP-binding domain occupies 224–391 (SLKTSQFHTH…LSGKYVLSRL (168 aa)). 237–244 (GITGSGKT) provides a ligand contact to ATP. The short motif at 333 to 336 (DEEH) is the DEAH box element. Residues Cys454, Cys457, Cys463, Cys466, Cys481, Cys484, Cys495, and Cys498 each contribute to the Zn(2+) site. The 169-residue stretch at 490–658 (DLPQSCPKCL…EYPPFIRLIR (169 aa)) folds into the Helicase C-terminal domain.

It belongs to the helicase family. PriA subfamily. In terms of assembly, component of the replication restart primosome. It depends on Zn(2+) as a cofactor.

It carries out the reaction Couples ATP hydrolysis with the unwinding of duplex DNA by translocating in the 3'-5' direction.. The enzyme catalyses ATP + H2O = ADP + phosphate + H(+). Functionally, initiates the restart of stalled replication forks, which reloads the replicative helicase on sites other than the origin of replication. Recognizes and binds to abandoned replication forks and remodels them to uncover a helicase loading site. Promotes assembly of the primosome at these replication forks. This Chlamydia pneumoniae (Chlamydophila pneumoniae) protein is Replication restart protein PriA.